The sequence spans 454 residues: Butyrophilin-like protein 2 (454 aa).

Residues 1 to 6 (MVDCPR) are Cytoplasmic-facing. The helical; Signal-anchor for type II membrane protein transmembrane segment at 7–23 (YSLSGVAASFLFVLLTI) threads the bilayer. Over 24-454 (KHPDDFRVVG…KTARFPLSGW (431 aa)) the chain is Extracellular. Ig-like V-type domains are found at residues 27-140 (DDFR…VLLQ), 148-234 (PNIH…ATIA), 244-355 (ASVS…ARVD), and 365-452 (PRIT…FPLS). Disulfide bonds link Cys-50-Cys-124, Cys-164-Cys-218, Cys-267-Cys-341, and Cys-381-Cys-435. 4 N-linked (GlcNAc...) asparagine glycosylation sites follow: Asn-210, Asn-296, Asn-427, and Asn-432.

Belongs to the immunoglobulin superfamily. BTN/MOG family. In terms of tissue distribution, highly expressed in intestine and at reduced levels in lung and stomach. Also expressed in thymus, spleen, lymph nodes, T-cells, B-cells, and macrophages.

It is found in the membrane. In terms of biological role, negative regulator of T-cell proliferation. The protein is Butyrophilin-like protein 2 of Mus musculus (Mouse).